Reading from the N-terminus, the 294-residue chain is GTPase Era (294 aa).

Residues 4-170 (KSGFVSVIGR…VEEIFTFLPE (167 aa)) form the Era-type G domain. The tract at residues 12 to 19 (GRPNVGKS) is G1. A GTP-binding site is contributed by 12–19 (GRPNVGKS). The G2 stretch occupies residues 38–42 (QTTRN). The tract at residues 59 to 62 (DTPG) is G3. Residues 59 to 63 (DTPGI) and 121 to 124 (NKID) each bind GTP. A G4 region spans residues 121-124 (NKID). The segment at 149 to 151 (ISA) is G5. A KH type-2 domain is found at 201–278 (TREEVPYGVA…YLDLWVKIEK (78 aa)).

It belongs to the TRAFAC class TrmE-Era-EngA-EngB-Septin-like GTPase superfamily. Era GTPase family. As to quaternary structure, monomer.

It is found in the cytoplasm. The protein localises to the cell inner membrane. An essential GTPase that binds both GDP and GTP, with rapid nucleotide exchange. Plays a role in 16S rRNA processing and 30S ribosomal subunit biogenesis and possibly also in cell cycle regulation and energy metabolism. In Halothermothrix orenii (strain H 168 / OCM 544 / DSM 9562), this protein is GTPase Era.